Here is a 408-residue protein sequence, read N- to C-terminus: Peptidase T (408 aa).

Zn(2+) is bound at residue H78. Residue D80 is part of the active site. D141 lines the Zn(2+) pocket. E175 acts as the Proton acceptor in catalysis. Zn(2+) is bound by residues E176, D198, and H380.

This sequence belongs to the peptidase M20B family. It depends on Zn(2+) as a cofactor.

Its subcellular location is the cytoplasm. It carries out the reaction Release of the N-terminal residue from a tripeptide.. Functionally, cleaves the N-terminal amino acid of tripeptides. This is Peptidase T from Clostridium botulinum (strain Okra / Type B1).